We begin with the raw amino-acid sequence, 27 residues long: uncharacterized protein (27 aa).

The chain crosses the membrane as a helical span at residues 3-23 (IILWAVLIIFLIGLLVVTGVF).

Its subcellular location is the cell inner membrane. This is an uncharacterized protein from Escherichia coli (strain K12).